The chain runs to 495 residues: Solute carrier family 2, facilitated glucose transporter member 3 (495 aa).

Topologically, residues 1-10 (MGTQKVTVSL) are cytoplasmic. A helical transmembrane segment spans residues 11–32 (IFALSIATIGSFQFGYNTGVIN). Residues 33–64 (APETIIKDFLNYTLEEKSENLPTEVLLTSLWS) are Extracellular-facing. A glycan (N-linked (GlcNAc...) asparagine) is linked at Asn-43. Residues 65 to 85 (LSVAIFSVGGMIGSFSVGLFV) traverse the membrane as a helical segment. The Cytoplasmic portion of the chain corresponds to 86-90 (NRFGR). A helical transmembrane segment spans residues 91–111 (RNSMLMVNLLAVAGGCLMGFC). Over 112–118 (KIAQSVE) the chain is Extracellular. The helical transmembrane segment at 119–142 (MLILGRLIIGLFCGLCTGFVPMYI) threads the bilayer. Residues 143 to 153 (GEISPTALRGA) lie on the Cytoplasmic side of the membrane. Residues 154–174 (FGTLNQLGIVIGILVAQIFGL) traverse the membrane as a helical segment. A D-glucose-binding site is contributed by Gln-159. Over 175–183 (KVIMGTEEL) the chain is Extracellular. Residues 184 to 204 (WPLLLGFTIIPAVLQSAALPF) traverse the membrane as a helical segment. Over 205 to 269 (CPESPRFLLI…LFRSRSYRQP (65 aa)) the chain is Cytoplasmic. Thr-232 is subject to Phosphothreonine. A helical transmembrane segment spans residues 270–290 (IIISIMLQLSQQLSGINAVFY). Residues 277 to 279 (QLS) form an important for selectivity against fructose region. D-glucose-binding positions include 280–281 (QQ) and Asn-286. Residues 291-304 (YSTGIFKDAGVEEP) are Extracellular-facing. A helical membrane pass occupies residues 305-325 (IYATIGAGVVNTIFTVVSLFL). Asn-315 is a D-glucose binding site. The Cytoplasmic segment spans residues 326–331 (VERAGR). Residues 332 to 352 (RTLHMIGLGGMAVCSILMTIS) form a helical membrane-spanning segment. Residues 353-363 (LLLKDNYNWMS) lie on the Extracellular side of the membrane. A helical transmembrane segment spans residues 364-389 (FVCIGAILVFVAFFEIGPGPIPWFIV). Residues Glu-378 and Trp-386 each coordinate D-glucose. Residues 390-399 (AELFSQGPRP) lie on the Cytoplasmic side of the membrane. The helical transmembrane segment at 400–420 (AAMAVAGCSNWTSNFLVGLLF) threads the bilayer. The Extracellular segment spans residues 421-429 (PSAAFYLGA). A helical transmembrane segment spans residues 430-450 (YVFIIFTGFLIVFLVFTFFKV). Residues 451–495 (PETRGRTFEEITRAFEGQGQDANRAEKGPIVEMNSMQPVKETATV) lie on the Cytoplasmic side of the membrane. Position 485 is a phosphoserine (Ser-485). Thr-492 is subject to Phosphothreonine.

Belongs to the major facilitator superfamily. Sugar transporter (TC 2.A.1.1) family. Glucose transporter subfamily. As to quaternary structure, interacts with SMIM43; the interaction may promote SLC2A3-mediated glucose transport to meet the energy needs of mesendoderm differentiation.

Its subcellular location is the cell membrane. It is found in the perikaryon. It localises to the cell projection. It catalyses the reaction D-glucose(out) = D-glucose(in). It carries out the reaction D-galactose(in) = D-galactose(out). With respect to regulation, deoxyglucose transport is inhibited by D-glucose, D-galactose and maltose. Galactose transport is inhibited by D-glucose and maltose. Functionally, facilitative glucose transporter. Can also mediate the uptake of various other monosaccharides across the cell membrane. Mediates the uptake of glucose, 2-deoxyglucose, galactose, mannose, xylose and fucose, and probably also dehydroascorbate. Does not mediate fructose transport. Required for mesendoderm differentiation. The polypeptide is Solute carrier family 2, facilitated glucose transporter member 3 (Canis lupus familiaris (Dog)).